Here is a 197-residue protein sequence, read N- to C-terminus: Molybdenum cofactor guanylyltransferase (197 aa).

Residues 10-12 (LAG), K23, N51, D69, and D99 each bind GTP. D99 contributes to the Mg(2+) binding site.

Belongs to the MobA family. As to quaternary structure, monomer. Mg(2+) is required as a cofactor.

Its subcellular location is the cytoplasm. The enzyme catalyses Mo-molybdopterin + GTP + H(+) = Mo-molybdopterin guanine dinucleotide + diphosphate. Functionally, transfers a GMP moiety from GTP to Mo-molybdopterin (Mo-MPT) cofactor (Moco or molybdenum cofactor) to form Mo-molybdopterin guanine dinucleotide (Mo-MGD) cofactor. This Shewanella sp. (strain MR-4) protein is Molybdenum cofactor guanylyltransferase.